The chain runs to 479 residues: Proline--tRNA ligase (479 aa).

It belongs to the class-II aminoacyl-tRNA synthetase family. ProS type 3 subfamily. In terms of assembly, homodimer.

It localises to the cytoplasm. The catalysed reaction is tRNA(Pro) + L-proline + ATP = L-prolyl-tRNA(Pro) + AMP + diphosphate. Its function is as follows. Catalyzes the attachment of proline to tRNA(Pro) in a two-step reaction: proline is first activated by ATP to form Pro-AMP and then transferred to the acceptor end of tRNA(Pro). The sequence is that of Proline--tRNA ligase from Lachnospira eligens (strain ATCC 27750 / DSM 3376 / VPI C15-48 / C15-B4) (Eubacterium eligens).